The chain runs to 178 residues: ATP synthase subunit b, chloroplastic (178 aa).

The chain crosses the membrane as a helical span at residues 34–50 (LAILTGGIFYLGSNALS).

It belongs to the ATPase B chain family. In terms of assembly, F-type ATPases have 2 components, F(1) - the catalytic core - and F(0) - the membrane proton channel. F(1) has five subunits: alpha(3), beta(3), gamma(1), delta(1), epsilon(1). F(0) has four main subunits: a(1), b(1), b'(1) and c(10-14). The alpha and beta chains form an alternating ring which encloses part of the gamma chain. F(1) is attached to F(0) by a central stalk formed by the gamma and epsilon chains, while a peripheral stalk is formed by the delta, b and b' chains.

It is found in the plastid. Its subcellular location is the chloroplast thylakoid membrane. F(1)F(0) ATP synthase produces ATP from ADP in the presence of a proton or sodium gradient. F-type ATPases consist of two structural domains, F(1) containing the extramembraneous catalytic core and F(0) containing the membrane proton channel, linked together by a central stalk and a peripheral stalk. During catalysis, ATP synthesis in the catalytic domain of F(1) is coupled via a rotary mechanism of the central stalk subunits to proton translocation. Functionally, component of the F(0) channel, it forms part of the peripheral stalk, linking F(1) to F(0). The sequence is that of ATP synthase subunit b, chloroplastic from Ochrosphaera neapolitana.